A 418-amino-acid chain; its full sequence is Serine hydroxymethyltransferase (418 aa).

(6S)-5,6,7,8-tetrahydrofolate-binding positions include Leu-121 and 125 to 127; that span reads GHL. At Lys-230 the chain carries N6-(pyridoxal phosphate)lysine. Residues Glu-246 and 355-357 contribute to the (6S)-5,6,7,8-tetrahydrofolate site; that span reads SPF.

It belongs to the SHMT family. In terms of assembly, homodimer. It depends on pyridoxal 5'-phosphate as a cofactor.

The protein resides in the cytoplasm. The catalysed reaction is (6R)-5,10-methylene-5,6,7,8-tetrahydrofolate + glycine + H2O = (6S)-5,6,7,8-tetrahydrofolate + L-serine. Its pathway is one-carbon metabolism; tetrahydrofolate interconversion. The protein operates within amino-acid biosynthesis; glycine biosynthesis; glycine from L-serine: step 1/1. Functionally, catalyzes the reversible interconversion of serine and glycine with tetrahydrofolate (THF) serving as the one-carbon carrier. This reaction serves as the major source of one-carbon groups required for the biosynthesis of purines, thymidylate, methionine, and other important biomolecules. Also exhibits THF-independent aldolase activity toward beta-hydroxyamino acids, producing glycine and aldehydes, via a retro-aldol mechanism. This is Serine hydroxymethyltransferase from Streptococcus pneumoniae (strain ATCC 700669 / Spain 23F-1).